A 544-amino-acid polypeptide reads, in one-letter code: MTCKNTRRLYQIITTFLRYGIDEIIPDIPLTRHARLGRKALFWVRNQHKDQPFGVRLRLALQELGPVWIKLGQMLSTRRDLFEPELAEQLALLQDSVEPFDGKSARQIIEQALGGSLETWFDEFDEQALASASIAQVHTAKFNQNQPLAGKDVVLKVIRPDIEPIIKADIALMYRLASWIPRLSNDAKRLRATEVVREYEKTLLDELDLTREMANAIRLRNNFENSEMLYVPEMYQDFCHKNVIVMERIYGIPVSDVETLKANGTDMKLLAERGVQVFFTQVFRDSFFHADMHAGNIFVNPNHPENPQYIGIDCGIVGTLNQNDKRYLAESFVAFFNRDYRRVALMHVESGWTPPDTDIDAFEQAFREVCEPIFAKPLSEISFGHVLLNLFNVAREFNMEVQPQLVLLQKTLLYIEGLGRQVYPQLDLWQTAKPFLQNWLNEQVGVKAILRDLKQRAPQFREHFAEFPEAVFNALQQQKQINFRLDELNKTLQAQGRQKSHNVRSIVSGVIILGVLWRFDDLPLWLSCGTLVTVLLVLLLQRKS.

The region spanning 123-505 (EFDEQALASA…GRQKSHNVRS (383 aa)) is the Protein kinase domain. Residues 129–137 (LASASIAQV) and Lys-156 each bind ATP. Asp-291 serves as the catalytic Proton acceptor. The chain crosses the membrane as a helical span at residues 522–540 (LPLWLSCGTLVTVLLVLLL).

Belongs to the ABC1 family. UbiB subfamily.

It is found in the cell inner membrane. It participates in cofactor biosynthesis; ubiquinone biosynthesis [regulation]. Is probably a protein kinase regulator of UbiI activity which is involved in aerobic coenzyme Q (ubiquinone) biosynthesis. The polypeptide is Probable protein kinase UbiB (Actinobacillus pleuropneumoniae serotype 5b (strain L20)).